We begin with the raw amino-acid sequence, 521 residues long: Bifunctional purine biosynthesis protein PurH (521 aa).

The 145-residue stretch at methionine 1–valine 145 folds into the MGS-like domain.

The protein belongs to the PurH family.

It carries out the reaction (6R)-10-formyltetrahydrofolate + 5-amino-1-(5-phospho-beta-D-ribosyl)imidazole-4-carboxamide = 5-formamido-1-(5-phospho-D-ribosyl)imidazole-4-carboxamide + (6S)-5,6,7,8-tetrahydrofolate. The enzyme catalyses IMP + H2O = 5-formamido-1-(5-phospho-D-ribosyl)imidazole-4-carboxamide. Its pathway is purine metabolism; IMP biosynthesis via de novo pathway; 5-formamido-1-(5-phospho-D-ribosyl)imidazole-4-carboxamide from 5-amino-1-(5-phospho-D-ribosyl)imidazole-4-carboxamide (10-formyl THF route): step 1/1. The protein operates within purine metabolism; IMP biosynthesis via de novo pathway; IMP from 5-formamido-1-(5-phospho-D-ribosyl)imidazole-4-carboxamide: step 1/1. In Burkholderia pseudomallei (strain 1710b), this protein is Bifunctional purine biosynthesis protein PurH.